The chain runs to 774 residues: DNA ligase (774 aa).

NAD(+) is bound by residues Asp36–Asp40, Ser85–Leu86, and Glu161. The active-site N6-AMP-lysine intermediate is Lys163. Arg184, Glu221, Lys341, and Lys365 together coordinate NAD(+). Cys459, Cys462, Cys477, and Cys482 together coordinate Zn(2+). Residues Val693 to Ile774 enclose the BRCT domain.

The protein belongs to the NAD-dependent DNA ligase family. LigA subfamily. It depends on Mg(2+) as a cofactor. Mn(2+) serves as cofactor.

It catalyses the reaction NAD(+) + (deoxyribonucleotide)n-3'-hydroxyl + 5'-phospho-(deoxyribonucleotide)m = (deoxyribonucleotide)n+m + AMP + beta-nicotinamide D-nucleotide.. Its function is as follows. DNA ligase that catalyzes the formation of phosphodiester linkages between 5'-phosphoryl and 3'-hydroxyl groups in double-stranded DNA using NAD as a coenzyme and as the energy source for the reaction. It is essential for DNA replication and repair of damaged DNA. In Trichodesmium erythraeum (strain IMS101), this protein is DNA ligase.